Reading from the N-terminus, the 2014-residue chain is AP-1 accessory protein LAA1 (2014 aa).

Interacts with the clathrin-associated adapter complex AP-1. Interacts directly with LAA2.

It is found in the golgi apparatus. It localises to the cytoplasmic vesicle. The protein localises to the clathrin-coated vesicle. Functionally, involved in localization of clathrin adapter protein complex-1 (AP-1) and subsequent AP-1-mediated clathrin-coated vesicle cargo loading. In complex with LAA2, cooperates with the small GTPase ARF1 and the phosphatidyl-inositol-4-phosphate (PI4P) synthesis to confer temporal specificity to AP-1 recruitment. In Saccharomyces cerevisiae (strain ATCC 204508 / S288c) (Baker's yeast), this protein is AP-1 accessory protein LAA1.